The chain runs to 1704 residues: Type-2 histone deacetylase 2 (1704 aa).

Disordered regions lie at residues 1 to 303, 315 to 383, and 540 to 634; these read MSTN…SEER, TQGS…TSKK, and QFLQ…IGNS. Positions 15–69 are enriched in low complexity; it reads TTITNESNTDNNNNNNDDNKNNTENTTSPTNNNNTNDNDNNSDNNNNKNNNNNNS. The segment covering 70–81 has biased composition (polar residues); it reads QVTEEQQVTLED. Residues 97–113 are compositionally biased toward acidic residues; the sequence is DSAEEDEDEMEDDDEDA. Residues 134–153 are compositionally biased toward polar residues; the sequence is KVQQSTNTHLSQTTPESPTI. Residues 165–176 show a composition bias toward low complexity; sequence STSTNNTPNTQS. Over residues 186-195 the composition is skewed to basic and acidic residues; sequence LTSDEEKDLM. Positions 196-210 are enriched in acidic residues; it reads LSEESDGGVGEDDDS. Residues 222 to 286 are compositionally biased toward low complexity; the sequence is NQSNQNQNNN…SNNDNNNNNN (65 aa). Positions 315-325 are enriched in polar residues; the sequence is TQGSSTTTSDP. Over residues 326 to 351 the composition is skewed to low complexity; that stretch reads NNQNNQINQINQNNQNNQNNQNNQNN. Residues 354 to 369 are compositionally biased toward acidic residues; it reads GEEEFGEEFEEEEEDM. Residues 372–382 show a composition bias toward basic residues; sequence PKKKTKYKTSK. 2 stretches are compositionally biased toward low complexity: residues 540–549 and 561–580; these read QFLQQQQQQQ and NSNN…NNNS. Residues 608 to 620 are compositionally biased toward basic and acidic residues; the sequence is YETRKYTKKRNDE. Substrate-binding residues include D1165 and G1227. A divalent metal cation is bound by residues D1256, H1258, and D1350. The segment at 1485–1704 is disordered; that stretch reads QLERQKQLQQ…TPQNINNSDN (220 aa). The segment covering 1491–1616 has biased composition (low complexity); the sequence is QLQQQQQQAQ…NNSNNNNNMN (126 aa). The span at 1649–1669 shows a compositional bias: polar residues; it reads LSPNSVNRGNNPSNISMSGAQ. The span at 1677–1698 shows a compositional bias: low complexity; the sequence is SPKPSNSPNSPSTSNNNGTPQN.

It belongs to the histone deacetylase family. HD type 2 subfamily.

The protein resides in the nucleus. The protein localises to the cytoplasm. The catalysed reaction is N(6)-acetyl-L-lysyl-[histone] + H2O = L-lysyl-[histone] + acetate. In terms of biological role, responsible for the deacetylation of lysine residues on the N-terminal part of the core histones (H2A, H2B, H3 and H4). Histone deacetylation plays an important role in transcriptional regulation, cell cycle progression and developmental events. Histone deacetylases act via the formation of large multiprotein complexes. This is Type-2 histone deacetylase 2 (hdaC) from Dictyostelium discoideum (Social amoeba).